The following is a 591-amino-acid chain: Inactive metallocarboxypeptidase ECM14 (591 aa).

The first 21 residues, 1–21 (MRLFSHLAVLAILACAVPITA), serve as a signal peptide directing secretion. Residues 22-175 (IPSFLSNSYP…QTIYESYPSS (154 aa)) constitute a propeptide that is removed on maturation. In terms of domain architecture, Peptidase M14 spans 203–523 (DYQPFSVIVP…NAVMVLGRFL (321 aa)). 2 residues coordinate Zn(2+): His-265 and Glu-268. Substrate is bound by residues 265–268 (HARE), Arg-323, and 340–341 (DR). A disulfide bridge connects residues Cys-334 and Cys-357. 3 N-linked (GlcNAc...) asparagine glycosylation sites follow: Asn-350, Asn-381, and Asn-386. Residue His-397 participates in Zn(2+) binding. A substrate-binding site is contributed by 398 to 399 (SY). Positions 533 to 591 (DWEDESQRPKADEDDIPSENELDENDDSWIPYDYRNHDDQNEGEGYDNDEWGFRRRRKR) are disordered. Acidic residues-rich tracts occupy residues 544 to 559 (DEDD…ENDD) and 573 to 582 (NEGEGYDNDE).

Belongs to the peptidase M14 family. Requires Zn(2+) as cofactor.

The protein resides in the vacuole. It localises to the secreted. In terms of biological role, inactive carboxypeptidase that may play a role in cell wall organization and biogenesis. This Paracoccidioides brasiliensis (strain Pb18) protein is Inactive metallocarboxypeptidase ECM14 (ECM14).